A 235-amino-acid polypeptide reads, in one-letter code: Pathogen-related protein (235 aa).

This chain is Pathogen-related protein, found in Hordeum vulgare (Barley).